The chain runs to 611 residues: Autophagy-related protein 22-2 (611 aa).

The disordered stretch occupies residues 1–24 (MRADDNPSARSLHAQFPGDDTRPT). The helical transmembrane segment at 35–55 (YGWAAEVFTVCAMGSFLPITL) threads the bilayer. A glycan (N-linked (GlcNAc...) asparagine) is linked at Asn-78. A run of 3 helical transmembrane segments spans residues 116-136 (TASFAMYTFSVSVFVQAVLII), 151-171 (LLVAFAVIGSVCTMLFLSVVP), and 175-195 (IVGALFAIVANTCFGASFVLL). Asn-221 carries an N-linked (GlcNAc...) asparagine glycan. A run of 2 helical transmembrane segments spans residues 286–306 (IGIGYIGAVILQIICILVIIA) and 316–336 (LVLFLIGLWWFVFTIPAALWL). Asn-353 is a glycosylation site (N-linked (GlcNAc...) asparagine). The next 6 membrane-spanning stretches (helical) occupy residues 380 to 400 (ILLFLTAWFLLSDGIATVSGT), 414 to 434 (AALGLINVVTMMAGVFGAFSW), 449 to 469 (IIACILLFELIPIYGLLGFVP), 483 to 503 (WEMFPLGIVYGLVMGGLSSYC), 521 to 541 (ALYAITDKGSSIFGPAIVGLI), and 551 to 571 (AFVFLAVLIFLPLPLMLLVDV).

This sequence belongs to the ATG22 family.

It is found in the vacuole membrane. Vacuolar effluxer which mediate the efflux of amino acids resulting from autophagic degradation. The release of autophagic amino acids allows the maintenance of protein synthesis and viability during nitrogen starvation. The sequence is that of Autophagy-related protein 22-2 (atg22-2) from Aspergillus clavatus (strain ATCC 1007 / CBS 513.65 / DSM 816 / NCTC 3887 / NRRL 1 / QM 1276 / 107).